Here is a 427-residue protein sequence, read N- to C-terminus: Fc receptor-like B (427 aa).

The first 17 residues, 1–17, serve as a signal peptide directing secretion; the sequence is MWMLAALLLLVPRSGKA. Ig-like C2-type domains lie at 23–101 and 103–189; these read PVLT…LSVS and DWLI…VAVT. 2 disulfides stabilise this stretch: cysteine 44/cysteine 85 and cysteine 124/cysteine 168. Asparagine 152 carries N-linked (GlcNAc...) asparagine glycosylation. A compositionally biased stretch (polar residues) spans 401-418; sequence TPETPNSHVTVNPATPET. The interval 401-427 is disordered; that stretch reads TPETPNSHVTVNPATPETTVMEGRVDS.

As to expression, expressed at low levels. Expressed in B-lymphocytes. Detected in spleen, lymph node, kidney, lung and brain.

The protein localises to the cytoplasm. The protein resides in the endoplasmic reticulum. The protein is Fc receptor-like B (Fcrlb) of Mus musculus (Mouse).